Here is a 328-residue protein sequence, read N- to C-terminus: Arabinose 5-phosphate isomerase KdsD (328 aa).

Residues 42-184 (CEKMFWCKGK…AVALLKARGF (143 aa)) form the SIS domain. Substrate-binding positions include 75 to 76 (GT), His82, His88, 114 to 123 (ALIPVLKRLH), 148 to 150 (KVA), Thr222, and Asp275. Position 82 (His82) interacts with Zn(2+). In terms of domain architecture, CBS 1 spans 210 to 268 (MHTGDEIPHVKKTASLRDALLEVTRKNLGMTVICDDNMMIEGIFTDGDLRRVFDMGVDV). The region spanning 277 to 328 (MTPGGIRVRPGILAVEALNLMQSRHITSVMVADGDHLLGVLHMHDLLRAGVV) is the CBS 2 domain.

The protein belongs to the SIS family. GutQ/KpsF subfamily. In terms of assembly, homotetramer.

The catalysed reaction is D-arabinose 5-phosphate = D-ribulose 5-phosphate. The protein operates within carbohydrate biosynthesis; 3-deoxy-D-manno-octulosonate biosynthesis; 3-deoxy-D-manno-octulosonate from D-ribulose 5-phosphate: step 1/3. It participates in bacterial outer membrane biogenesis; lipopolysaccharide biosynthesis. Its activity is regulated as follows. Completely inhibited by 10 uM of nickel, copper, cadmium and mercury ions. Inhibited by zinc with an IC(50) of 1-3 uM. Metal ion inhibition may be a mechanism to control activity in vivo. Its function is as follows. Involved in the biosynthesis of 3-deoxy-D-manno-octulosonate (KDO), a unique 8-carbon sugar component of lipopolysaccharides (LPSs). KdsD is not essential in the KDO biosynthesis and can be substituted by GutQ. Catalyzes the reversible aldol-ketol isomerization between D-ribulose 5-phosphate (Ru5P) and D-arabinose 5-phosphate (A5P). This chain is Arabinose 5-phosphate isomerase KdsD (kdsD), found in Escherichia coli (strain K12).